A 383-amino-acid chain; its full sequence is Lipoyl synthase, mitochondrial (383 aa).

The span at 25-34 (STPSLLQTLD) shows a compositional bias: polar residues. Residues 25–44 (STPSLLQTLDPSVPSPPAAG) are disordered. 7 residues coordinate [4Fe-4S] cluster: Cys-110, Cys-115, Cys-121, Cys-141, Cys-145, Cys-148, and Ser-357. The 221-residue stretch at 126-346 (ETGTATATIM…RALGVEMGFR (221 aa)) folds into the Radical SAM core domain.

This sequence belongs to the radical SAM superfamily. Lipoyl synthase family. Requires [4Fe-4S] cluster as cofactor.

It localises to the mitochondrion. The catalysed reaction is [[Fe-S] cluster scaffold protein carrying a second [4Fe-4S](2+) cluster] + N(6)-octanoyl-L-lysyl-[protein] + 2 oxidized [2Fe-2S]-[ferredoxin] + 2 S-adenosyl-L-methionine + 4 H(+) = [[Fe-S] cluster scaffold protein] + N(6)-[(R)-dihydrolipoyl]-L-lysyl-[protein] + 4 Fe(3+) + 2 hydrogen sulfide + 2 5'-deoxyadenosine + 2 L-methionine + 2 reduced [2Fe-2S]-[ferredoxin]. It functions in the pathway protein modification; protein lipoylation via endogenous pathway; protein N(6)-(lipoyl)lysine from octanoyl-[acyl-carrier-protein]: step 2/2. Functionally, catalyzes the radical-mediated insertion of two sulfur atoms into the C-6 and C-8 positions of the octanoyl moiety bound to the lipoyl domains of lipoate-dependent enzymes, thereby converting the octanoylated domains into lipoylated derivatives. This chain is Lipoyl synthase, mitochondrial, found in Zea mays (Maize).